A 137-amino-acid chain; its full sequence is Peptide methionine sulfoxide reductase MsrB (137 aa).

Positions methionine 1–threonine 33 are disordered. The MsrB domain occupies aspartate 13–alanine 135. Positions 52, 55, 101, and 104 each coordinate Zn(2+). Cysteine 124 (nucleophile) is an active-site residue.

The protein belongs to the MsrB Met sulfoxide reductase family. Requires Zn(2+) as cofactor.

The catalysed reaction is L-methionyl-[protein] + [thioredoxin]-disulfide + H2O = L-methionyl-(R)-S-oxide-[protein] + [thioredoxin]-dithiol. This is Peptide methionine sulfoxide reductase MsrB from Thioalkalivibrio sulfidiphilus (strain HL-EbGR7).